A 1581-amino-acid chain; its full sequence is ATP-binding cassette sub-family C member 8 (1581 aa).

Residues 1–30 (MPLAFCGSENHSAAYRVDQGVLNNGCFVDA) lie on the Extracellular side of the membrane. A disulfide bond links Cys-6 and Cys-26. Asn-10 carries an N-linked (GlcNAc...) asparagine glycan. The chain crosses the membrane as a helical span at residues 31–47 (LNVVPHVFLLFITFPIL). The Cytoplasmic portion of the chain corresponds to 48 to 72 (FIGWGSQSSKVHIHHSTWLHFPGHN). A helical transmembrane segment spans residues 73–89 (LRWILTFMLLFVLVCEI). The Extracellular portion of the chain corresponds to 90–106 (AEGILSDGVTESHHLHL). Residues 107–123 (YMPAGMAFMAAVTSVVY) traverse the membrane as a helical segment. At 124–136 (YHNIETSNFPKLL) the chain is on the cytoplasmic side. A helical membrane pass occupies residues 137–153 (IALLVYWTLAFITKTIK). Residues 154–169 (FVKFLDHAIGFSQLRF) are Extracellular-facing. A helical transmembrane segment spans residues 170 to 186 (CLTGLLVILYGMLLLVE). At 187 to 303 (VNVIRVRRYI…AFGRRLVLSS (117 aa)) the chain is on the cytoplasmic side. The 304-residue stretch at 299 to 602 (LVLSSTFRIL…LSSVVRSTVK (304 aa)) folds into the ABC transmembrane type-1 1 domain. Residues 304–319 (TFRILADLLGFAGPLC) form a helical membrane-spanning segment. The Extracellular segment spans residues 320 to 356 (IFGIVDHLGKENDVFQPKTQFLGVYFVSSQEFLANAY). A helical membrane pass occupies residues 357-372 (VLAVLLFLALLLQRTF). The Cytoplasmic portion of the chain corresponds to 373–438 (LQASYYVAIE…MWFFFLCPNL (66 aa)). The chain crosses the membrane as a helical span at residues 439-454 (WAMPVQIIVGVILLYY). Residues 455–460 (ILGVSA) lie on the Extracellular side of the membrane. A helical membrane pass occupies residues 461–473 (LIGAAVIILLAPV). Over 474–541 (QYFVATKLSQ…SLRAFAIYTS (68 aa)) the chain is Cytoplasmic. Residues 542-557 (ISIFMNTAIPIAAVLI) traverse the membrane as a helical segment. Residues 558–576 (TFVGHVSFFKEADFSPSVA) lie on the Extracellular side of the membrane. The helical transmembrane segment at 577 to 592 (FASLSLFHILVTPLFL) threads the bilayer. Topologically, residues 593–1012 (LSSVVRSTVK…YLSSAGILLL (420 aa)) are cytoplasmic. Residues 679 to 929 (VQIMGGYFTW…ECQLFEHWKT (251 aa)) form the ABC transporter 1 domain. ATP is bound by residues Trp-688, Gly-716, Ser-720, and Ser-721. Ser-720 is a binding site for Mg(2+). Gln-774 contacts Mg(2+). Basic and acidic residues predominate over residues 935–949 (DQELEKETVTERKAT). The interval 935–987 (DQELEKETVTERKATEPPQGLSRAMSSRDGLLQDEEEEEEEAAESEEDDNLSS) is disordered. Residues 966 to 984 (LQDEEEEEEEAAESEEDDN) are compositionally biased toward acidic residues. Positions 1012–1306 (LSLLVFSQLL…MVRNLADMEL (295 aa)) constitute an ABC transmembrane type-1 2 domain. Residues 1013-1030 (SLLVFSQLLKHMVLVAID) traverse the membrane as a helical segment. Topologically, residues 1031 to 1066 (YWLAKWTDSALTLTPAARNCSLSQECTLDQTVYAMV) are extracellular. Residue Asn-1049 is glycosylated (N-linked (GlcNAc...) asparagine). A helical transmembrane segment spans residues 1067–1083 (FTVLCSLGIVLCLVTSV). The Cytoplasmic portion of the chain corresponds to 1084–1142 (TVEWTGLKVAKRLHRSLLNRIILAPMRFFETTPLGSILNRFSSDCNTIDQHIPSTLECL). Residues 1143–1160 (SRSTLLCVSALAVISYVT) traverse the membrane as a helical segment. Position 1161 (Pro-1161) is a topological domain, extracellular. The helical transmembrane segment at 1162–1174 (VFLVALLPLAIVC) threads the bilayer. Topologically, residues 1175 to 1248 (YFIQKYFRVA…FLTAANRWLE (74 aa)) are cytoplasmic. The chain crosses the membrane as a helical span at residues 1249-1264 (VRMEYIGACVVLIAAV). Residues 1265 to 1280 (TSISNSLHRELSAGLV) are Extracellular-facing. The helical transmembrane segment at 1281–1296 (GLGLTYALMVSNYLNW) threads the bilayer. Residues 1297-1581 (MVRNLADMEL…VFASFVRADK (285 aa)) are Cytoplasmic-facing. The region spanning 1344-1578 (IQIQNLSVRY…KDSVFASFVR (235 aa)) is the ABC transporter 2 domain. Thr-1380, Gly-1381, Gly-1383, Lys-1384, Ser-1385, and Ser-1386 together coordinate ADP. Residue Ser-1482 participates in ATP binding.

It belongs to the ABC transporter superfamily. ABCC family. Conjugate transporter (TC 3.A.1.208) subfamily. In terms of assembly, forms an heterooctamer with KCNJ11; four ABCC8/SUR1 molecules interact with one KCNJ11 homotetramer.

The protein resides in the cell membrane. KATP channels are regulated by cytoplasmic ATP/ADP ratios; ATP inhibits the channel by closing the pore, while ADP activates the channel. Activated by phosphatidylinositol 4,5-biphosphate (PtdIns(4,5)P2). Its function is as follows. Regulator subunit of pancreatic ATP-sensitive potassium channel (KATP), playing a major role in the regulation of insulin release. In pancreatic cells, it forms KATP channels with KCNJ11; KCNJ11 forms the channel pore while ABCC8 is required for activation and regulation. The sequence is that of ATP-binding cassette sub-family C member 8 (ABCC8) from Homo sapiens (Human).